Here is a 120-residue protein sequence, read N- to C-terminus: Small ribosomal subunit protein uS12 (120 aa).

Aspartate 88 is modified (3-methylthioaspartic acid).

This sequence belongs to the universal ribosomal protein uS12 family. Part of the 30S ribosomal subunit. Contacts proteins S8 and S17. May interact with IF1 in the 30S initiation complex.

In terms of biological role, with S4 and S5 plays an important role in translational accuracy. Its function is as follows. Interacts with and stabilizes bases of the 16S rRNA that are involved in tRNA selection in the A site and with the mRNA backbone. Located at the interface of the 30S and 50S subunits, it traverses the body of the 30S subunit contacting proteins on the other side and probably holding the rRNA structure together. The combined cluster of proteins S8, S12 and S17 appears to hold together the shoulder and platform of the 30S subunit. The chain is Small ribosomal subunit protein uS12 from Carsonella ruddii (strain PV).